The primary structure comprises 445 residues: Na(+)-translocating NADH-quinone reductase subunit A (445 aa).

This sequence belongs to the NqrA family. In terms of assembly, composed of six subunits; NqrA, NqrB, NqrC, NqrD, NqrE and NqrF.

It carries out the reaction a ubiquinone + n Na(+)(in) + NADH + H(+) = a ubiquinol + n Na(+)(out) + NAD(+). Its function is as follows. NQR complex catalyzes the reduction of ubiquinone-1 to ubiquinol by two successive reactions, coupled with the transport of Na(+) ions from the cytoplasm to the periplasm. NqrA to NqrE are probably involved in the second step, the conversion of ubisemiquinone to ubiquinol. In Pseudomonas aeruginosa (strain ATCC 15692 / DSM 22644 / CIP 104116 / JCM 14847 / LMG 12228 / 1C / PRS 101 / PAO1), this protein is Na(+)-translocating NADH-quinone reductase subunit A.